The following is a 90-amino-acid chain: Probable Fe(2+)-trafficking protein (90 aa).

This sequence belongs to the Fe(2+)-trafficking protein family.

Could be a mediator in iron transactions between iron acquisition and iron-requiring processes, such as synthesis and/or repair of Fe-S clusters in biosynthetic enzymes. The polypeptide is Probable Fe(2+)-trafficking protein (Polynucleobacter asymbioticus (strain DSM 18221 / CIP 109841 / QLW-P1DMWA-1) (Polynucleobacter necessarius subsp. asymbioticus)).